The sequence spans 630 residues: Triacylglycerol lipase ptl2 (630 aa).

The PNPLA domain occupies 251-442 (LCLSGGASFA…RTDIPLSELR (192 aa)). The GXSXG signature appears at 282-286 (GTSGG). Catalysis depends on Ser-284, which acts as the Nucleophile. Residue Asp-429 is the Proton acceptor of the active site.

This sequence belongs to the PLPL family.

Its subcellular location is the lipid droplet. It carries out the reaction a triacylglycerol + H2O = a diacylglycerol + a fatty acid + H(+). Its function is as follows. Lipid particle-localized triacylglycerol (TAG) lipase. The lipid droplet/particle is a lipid storage compartment which serves as a depot of energy and building blocks for membrane lipid biosynthesis. Involved in the mobilization of the non-polar storage lipids triacylglycerols (TAGs) from lipid particles by hydrolysis of TAGs, releasing and supplying specific fatty acids to the appropriate metabolic pathways. This chain is Triacylglycerol lipase ptl2 (ptl2), found in Schizosaccharomyces pombe (strain 972 / ATCC 24843) (Fission yeast).